Consider the following 85-residue polypeptide: MVKLRLKRCGRKQRAVYRIVAIDVRSRREGKDLRKVGFYDPIKNQTYLNVPAILYFLEKGAQPTGTVQDILKKAEVFKELRPNQS.

It belongs to the bacterial ribosomal protein bS16 family.

Its subcellular location is the plastid. The protein localises to the chloroplast. In Nicotiana tabacum (Common tobacco), this protein is Small ribosomal subunit protein bS16c.